The chain runs to 452 residues: Mitochondrial distribution and morphology protein 10 (452 aa).

Residues 105 to 130 (PLAPESWDSDGPGHEGSDGQEDETTP) form a disordered region.

Belongs to the MDM10 family. In terms of assembly, component of the ER-mitochondria encounter structure (ERMES) or MDM complex, composed of MMM1, MDM10, MDM12 and MDM34. Associates with the mitochondrial outer membrane sorting assembly machinery SAM(core) complex.

The protein localises to the mitochondrion outer membrane. Functionally, component of the ERMES/MDM complex, which serves as a molecular tether to connect the endoplasmic reticulum and mitochondria. Components of this complex are involved in the control of mitochondrial shape and protein biogenesis and may function in phospholipid exchange. MDM10 is involved in the late assembly steps of the general translocase of the mitochondrial outer membrane (TOM complex). Functions in the TOM40-specific route of the assembly of outer membrane beta-barrel proteins, including the association of TOM40 with the receptor TOM22 and small TOM proteins. Can associate with the SAM(core) complex as well as the MDM12-MMM1 complex, both involved in late steps of the major beta-barrel assembly pathway, that is responsible for biogenesis of all outer membrane beta-barrel proteins. May act as a switch that shuttles between both complexes and channels precursor proteins into the TOM40-specific pathway. Plays a role in mitochondrial morphology and in the inheritance of mitochondria. The chain is Mitochondrial distribution and morphology protein 10 from Uncinocarpus reesii (strain UAMH 1704).